The primary structure comprises 1228 residues: Clustered mitochondria protein homolog (1228 aa).

The Clu domain maps to 298–557; sequence PSSLPSNSID…DNNPLDVGFA (260 aa). Residues 486–519 form a TPR 1 repeat; it reads CYGFDEASNKVIADAEFGSSLDDFAKVFHLKKHE. Residues 671–702 adopt a coiled-coil conformation; the sequence is LGRVIELAEQELEAQRALREAHLQQVEADNKE. TPR repeat units follow at residues 982–1015 and 1108–1141; these read AESY…YERV and AVNE…FSKE.

This sequence belongs to the CLU family. As to quaternary structure, may associate with the eukaryotic translation initiation factor 3 (eIF-3) complex.

The protein localises to the cytoplasm. Its function is as follows. mRNA-binding protein involved in proper cytoplasmic distribution of mitochondria. The sequence is that of Clustered mitochondria protein homolog from Eremothecium gossypii (strain ATCC 10895 / CBS 109.51 / FGSC 9923 / NRRL Y-1056) (Yeast).